The primary structure comprises 1339 residues: Receptor tyrosine-protein kinase erbB-3 (1339 aa).

A signal peptide spans 1–19 (MSAIGTLQVLGFLLSLARG). The Extracellular portion of the chain corresponds to 20–641 (SEMGNSQAVC…QAEVLMSKPH (622 aa)). Residue Asn-126 is glycosylated (N-linked (GlcNAc...) asparagine). 11 disulfide bridges follow: Cys-186–Cys-194, Cys-190–Cys-202, Cys-210–Cys-218, Cys-214–Cys-226, Cys-227–Cys-235, Cys-231–Cys-243, Cys-246–Cys-255, Cys-259–Cys-286, Cys-290–Cys-301, Cys-305–Cys-320, and Cys-323–Cys-327. An N-linked (GlcNAc...) asparagine glycan is attached at Asn-250. 5 N-linked (GlcNAc...) asparagine glycosylation sites follow: Asn-353, Asn-408, Asn-414, Asn-437, and Asn-469. Disulfide bonds link Cys-500/Cys-509, Cys-504/Cys-517, Cys-520/Cys-529, Cys-533/Cys-549, Cys-552/Cys-565, Cys-556/Cys-573, Cys-576/Cys-585, Cys-589/Cys-610, Cys-613/Cys-621, and Cys-617/Cys-629. Asn-522 is a glycosylation site (N-linked (GlcNAc...) asparagine). Asn-566 carries an N-linked (GlcNAc...) asparagine glycan. Residue Asn-616 is glycosylated (N-linked (GlcNAc...) asparagine). Residues 642 to 662 (LVIAVTVGLTVIFLILGGSFL) traverse the membrane as a helical segment. The Cytoplasmic portion of the chain corresponds to 663–1339 (YWRGRRIQNK…LFPKANAQRI (677 aa)). Ser-684 carries the post-translational modification Phosphoserine. The Protein kinase domain maps to 707–964 (LRKLKVLGSG…TFKELANEFT (258 aa)). ATP-binding positions include 713-721 (LGSGVFGTV), Lys-740, 786-788 (QYL), and 832-837 (DLALRN). Asp-832 serves as the catalytic Proton acceptor. Residue Ser-980 is modified to Phosphoserine. 3 disordered regions span residues 1028 to 1052 (LSLP…SGYM), 1077 to 1156 (RPIS…GNGY), and 1181 to 1212 (SVLG…PRPG). Residues 1185 to 1195 (TEEEDEDEEYE) show a composition bias toward acidic residues.

The protein belongs to the protein kinase superfamily. Tyr protein kinase family. EGF receptor subfamily. Monomer and homodimer. Heterodimer with each of the other ERBB receptors (Potential). Interacts with CSPG5, PA2G4, GRB7 and MUC1. Interacts with MYOC. Found in a ternary complex with NRG1 and ITGAV:ITGB3 or ITGA6:ITGB4. In terms of processing, autophosphorylated. Ligand-binding increases phosphorylation on tyrosine residues and promotes its association with the p85 subunit of phosphatidylinositol 3-kinase. In the muscle, expression localizes to the synaptic sites of muscle fibers.

The protein localises to the membrane. The enzyme catalyses L-tyrosyl-[protein] + ATP = O-phospho-L-tyrosyl-[protein] + ADP + H(+). Its function is as follows. Tyrosine-protein kinase that plays an essential role as cell surface receptor for neuregulins. Binds to neuregulin-1 (NRG1) and is activated by it; ligand-binding increases phosphorylation on tyrosine residues and promotes its association with the p85 subunit of phosphatidylinositol 3-kinase. May also be activated by CSPG5. Involved in the regulation of myeloid cell differentiation. This is Receptor tyrosine-protein kinase erbB-3 (Erbb3) from Mus musculus (Mouse).